The primary structure comprises 465 residues: MPNDLLKEYKNAWDKYDDKQLKEVFALGDRFKNFISNCKTERECVTELIKTAEKSGYRNIEDILAKGETLKEGDKVYANNRGKGLIMFLIGKEPLYTGFKILGAHIDSPRLDLKQNPLYEDTDLAMLETHYYGGIKKYQWVTLPLAIHGVIVKKDGTIVNVCVGEDDNDPVFGVSDILVHLASEQLEKKASKVIEGEDLNILIGSIPLKDGEEKQKVKHNIMKILNEKYDISEEDFVSAELEIVPAGKARDYGFDRSMVMGYGQDDRICAYTSFEAMLEMKNAKKTCITILVDKEEVGSIGATGMQSKFFENTVADIMSLCGDYDELKLRKALYNSEMLSSDVSAAFDPNYPNVMEKRNSAYLGKGIVFNKYTGSRGKSGCNDANPEYIAELRRILSKESVNWQTAELGKVDQGGGGTIAYILAEYGMQVIDCGVALLNMHAPWEISSKADIYETKNGYSAFLNN.

The Zn(2+) site is built by histidine 105, histidine 180, and histidine 441.

Belongs to the peptidase M18 family. Requires Zn(2+) as cofactor.

The protein is Probable M18 family aminopeptidase 1 (apeA) of Clostridium acetobutylicum (strain ATCC 824 / DSM 792 / JCM 1419 / IAM 19013 / LMG 5710 / NBRC 13948 / NRRL B-527 / VKM B-1787 / 2291 / W).